Reading from the N-terminus, the 147-residue chain is uncharacterized protein (147 aa).

4 helical membrane-spanning segments follow: residues Leu13–Leu33, Leu45–Leu65, Tyr80–Ile100, and Trp116–Tyr136.

The protein resides in the cell membrane. This is an uncharacterized protein from Methanocaldococcus jannaschii (strain ATCC 43067 / DSM 2661 / JAL-1 / JCM 10045 / NBRC 100440) (Methanococcus jannaschii).